A 243-amino-acid chain; its full sequence is Flavin-dependent thymidylate synthase (243 aa).

Positions 2–207 constitute a ThyX domain; it reads VKVKLINYTP…ELKPIIEWAK (206 aa). Residues serine 56, 80 to 82, and glutamine 88 each bind FAD; that span reads RHR. Residues 77–80, 88–92, and arginine 146 contribute to the dUMP site; these read QLVR and QQSQR. The ThyX motif signature appears at 80-90; that stretch reads RHRIASYTQQS. Residues 162–164 and histidine 168 each bind FAD; that span reads NLR. Arginine 173 contacts dUMP. Arginine 173 functions as the Involved in ionization of N3 of dUMP, leading to its activation in the catalytic mechanism.

This sequence belongs to the thymidylate synthase ThyX family. As to quaternary structure, homotetramer. FAD serves as cofactor.

It catalyses the reaction dUMP + (6R)-5,10-methylene-5,6,7,8-tetrahydrofolate + NADPH + H(+) = dTMP + (6S)-5,6,7,8-tetrahydrofolate + NADP(+). Its pathway is pyrimidine metabolism; dTTP biosynthesis. Its function is as follows. Catalyzes the reductive methylation of 2'-deoxyuridine-5'-monophosphate (dUMP) to 2'-deoxythymidine-5'-monophosphate (dTMP) while utilizing 5,10-methylenetetrahydrofolate (mTHF) as the methyl donor, and NADPH and FADH(2) as the reductant. The protein is Flavin-dependent thymidylate synthase of Pyrococcus horikoshii (strain ATCC 700860 / DSM 12428 / JCM 9974 / NBRC 100139 / OT-3).